The following is a 165-amino-acid chain: UPF0114 protein ESA_00283 (165 aa).

Helical transmembrane passes span 15 to 35 (LLAPVYFGLSLALLALTVKFF), 53 to 73 (LILLLLSLVDMTLVGGLLVMV), and 136 to 156 (LMWYVIIHLTFVLSAFVMGYL).

Belongs to the UPF0114 family.

It is found in the cell membrane. The chain is UPF0114 protein ESA_00283 from Cronobacter sakazakii (strain ATCC BAA-894) (Enterobacter sakazakii).